Consider the following 914-residue polypeptide: MPLKLDIKRRLTSRSDRVKCVDLHPAEPWMLCALYNGHVHIMNYENQQMVKDFEVCDVPVRSARFVARKNWILTGSDDMQIRVFNYNTLEKVHSFEAHSDYLRCIAVHPTQPLVLTSSDDMLIKLWNWEKMWACQRVFEGHTHYVMQIVFNPKDNNTFASASLDRTVKVWQLGSNFANFTLEGHEKGVNCVDYYHGGDKPYLISGADDRLVKIWDYQNKTCVQTLEGHAQNISAVCFHPELPIVLTGSEDGTVRIWHSGTYRLETCLNYGFERVWTISSMRGTNNVALGYDEGSIIIKVGREEPAMSMDVVGSKIIWAKHSEMQQVNLKTIADGTEIKDGERLPVATKDMGACEIYPQTIAHNPNGRFVVVCGDGEYIIYTSMALRNKAFGSAQEFVWALESNEYAIRENNGTVRLFRNFKERKSFTPEYGAESIYGGYYFGVKTSSGLAFYDWETLQLVRRIEVQPKNVFWNESGSLVCLATDDSYFVLGVDTAQVANAVETKEGLEDDGVESAFNVLGEVSECVKTGLWVGDCFIYTNSVNRINYYVGGEIVTVSHLDRTMYLLGYVPKDNRIYLGDKELNVISFCLQLSVLEYQTAVMRRDFERADVVLPTIPKEHRTRVAHFLEKQGFKSQALQVSTDADHKFDLALQIGDLEIALKLARESENSQKWSQLADVASSKNNMSLVKECMQKANDLSGLLLLSTASGDAQLLEVVGAAGSAQGHHNLAFLSAFLRSDVERCLEILIETNRLPEAAFFARTYLPSQMSRIVELWREKLGKVNEKAGQSLADPAQYTNLFPGLGDALRVEQHLQEERARKAPARLAANLPLNSERHPLQELFAAEQGAAGQHLEEKVKPAYVPAQAVVSSSQVAEPTSAADDDDDLDLEIDGITLDDNIDTTDVNLDDDFLSDD.

WD repeat units lie at residues 13–54 (SRSD…KDFE), 55–94 (VCDV…KVHS), 97–136 (AHSD…ACQR), 140–180 (GHTH…ANFT), 183–224 (GHEK…CVQT), 227–266 (GHAQ…LETC), and 352–390 (ACEI…NKAF).

The protein belongs to the WD repeat COPB2 family. In terms of assembly, oligomeric complex that consists of at least the alpha, beta, beta', gamma, delta, epsilon and zeta subunits.

The protein localises to the cytoplasm. It is found in the golgi apparatus membrane. Its subcellular location is the cytoplasmic vesicle. It localises to the COPI-coated vesicle membrane. In terms of biological role, the coatomer is a cytosolic protein complex that binds to dilysine motifs and reversibly associates with Golgi non-clathrin-coated vesicles, which further mediate biosynthetic protein transport from the ER, via the Golgi up to the trans Golgi network. Coatomer complex is required for budding from Golgi membranes, and is essential for the retrograde Golgi-to-ER transport of dilysine-tagged proteins. This Drosophila melanogaster (Fruit fly) protein is Coatomer subunit beta'.